The sequence spans 261 residues: uncharacterized protein (261 aa).

Residue Glu-46 is part of the active site.

The protein belongs to the PhzF family.

This is an uncharacterized protein from Pseudomonas aeruginosa (strain ATCC 15692 / DSM 22644 / CIP 104116 / JCM 14847 / LMG 12228 / 1C / PRS 101 / PAO1).